Here is a 44-residue protein sequence, read N- to C-terminus: Photosystem I reaction center subunit IX (44 aa).

Residues 7 to 27 traverse the membrane as a helical segment; the sequence is YLSVAPVLTTLWFGSLAGLLI.

Belongs to the PsaJ family.

It localises to the plastid. The protein localises to the chloroplast thylakoid membrane. In terms of biological role, may help in the organization of the PsaE and PsaF subunits. The protein is Photosystem I reaction center subunit IX of Liriodendron tulipifera (Tuliptree).